Reading from the N-terminus, the 1008-residue chain is Retinoblastoma-related protein (1008 aa).

Positions 375–394 are disordered; that stretch reads KRKVDSMTSPTKTITSPLSP. Residues 380 to 392 are compositionally biased toward polar residues; that stretch reads SMTSPTKTITSPL. The interval 404-605 is domain A; the sequence is TPVSTAMTTA…EKGSSMYNSL (202 aa). Positions 404–853 are pocket; the sequence is TPVSTAMTTA…NEVFIPSVKP (450 aa). The segment at 606-722 is spacer; the sequence is TIARPNLSNE…HPTRGETCGE (117 aa). Residues 723–853 are domain B; that stretch reads TAVNLFFSKI…NEVFIPSVKP (131 aa). Disordered stretches follow at residues 865–899 and 988–1008; these read KNPN…SLPD and LQNG…LKTE.

Belongs to the retinoblastoma protein (RB) family.

Its subcellular location is the nucleus. Functionally, regulator of biological processes that recruits a histone deacetylase to control gene transcription. May play a role in the entry into mitosis, negatively regulating the cell proliferation. Formation of stable complexes with geminiviridae replication-associated proteins may create a cellular environment which favors viral DNA replication. In Pilosella officinarum (Mouse-ear hawkweed), this protein is Retinoblastoma-related protein (RBR).